The sequence spans 85 residues: Kunitz-type serine protease inhibitor homolog beta-bungarotoxin B2a chain (85 aa).

An N-terminal signal peptide occupies residues 1–24 (MSSGGLLLLLGLLTLWAELTPVSS). In terms of domain architecture, BPTI/Kunitz inhibitor spans 31–81 (CDKPPDTKICQTVVRAFYYKPSAKRCVQFRYGGCNGNGNHFKSDHLCRCEC). 3 disulfides stabilise this stretch: C31–C81, C40–C64, and C56–C77.

The protein belongs to the venom Kunitz-type family. As to quaternary structure, heterodimer; disulfide-linked. The A chain has phospholipase A2 activity and the B chain shows homology with the basic protease inhibitors. In terms of tissue distribution, expressed by the venom gland.

It localises to the secreted. Its function is as follows. Beta-bungarotoxin is a presynaptic neurotoxin of the venom. The B chain is homologous to venom basic protease inhibitors but has no protease inhibitor activity and is non-toxic. In Bungarus candidus (Malayan krait), this protein is Kunitz-type serine protease inhibitor homolog beta-bungarotoxin B2a chain.